Here is an 81-residue protein sequence, read N- to C-terminus: Large ribosomal subunit protein bL31B (81 aa).

Belongs to the bacterial ribosomal protein bL31 family. Type B subfamily. In terms of assembly, part of the 50S ribosomal subunit.

The sequence is that of Large ribosomal subunit protein bL31B from Exiguobacterium sibiricum (strain DSM 17290 / CCUG 55495 / CIP 109462 / JCM 13490 / 255-15).